The following is a 2340-amino-acid chain: Protein pad-1 (2340 aa).

2 disordered regions span residues 411–458 (KLIK…EPSI) and 1910–1959 (TRNS…RRDP). The segment covering 415-432 (KRPDSKPPRKPGDREGLH) has biased composition (basic and acidic residues). The span at 437-448 (SLHSGVSGNSED) shows a compositional bias: polar residues. The segment covering 1922–1934 (GGSITSGSTSTTT) has biased composition (low complexity).

Belongs to the DOP1 family.

Essential for cell patterning during gastrulation. May be involved in protein traffic between late Golgi and early endosomes. This Caenorhabditis briggsae protein is Protein pad-1 (pad-1).